The sequence spans 423 residues: Diaminobutyrate--2-oxoglutarate transaminase (423 aa).

Lys271 is subject to N6-(pyridoxal phosphate)lysine.

It belongs to the class-III pyridoxal-phosphate-dependent aminotransferase family. The cofactor is pyridoxal 5'-phosphate.

The enzyme catalyses L-2,4-diaminobutanoate + 2-oxoglutarate = L-aspartate 4-semialdehyde + L-glutamate. The protein operates within amine and polyamine biosynthesis; ectoine biosynthesis; L-ectoine from L-aspartate 4-semialdehyde: step 1/3. Its function is as follows. Catalyzes reversively the conversion of L-aspartate beta-semialdehyde (ASA) to L-2,4-diaminobutyrate (DABA) by transamination with L-glutamate. The chain is Diaminobutyrate--2-oxoglutarate transaminase (ectB) from Streptomyces avermitilis (strain ATCC 31267 / DSM 46492 / JCM 5070 / NBRC 14893 / NCIMB 12804 / NRRL 8165 / MA-4680).